Consider the following 115-residue polypeptide: UPF0102 protein Swol_1475 (115 aa).

It belongs to the UPF0102 family.

The polypeptide is UPF0102 protein Swol_1475 (Syntrophomonas wolfei subsp. wolfei (strain DSM 2245B / Goettingen)).